Reading from the N-terminus, the 212-residue chain is ATP phosphoribosyltransferase (212 aa).

This sequence belongs to the ATP phosphoribosyltransferase family. Short subfamily. As to quaternary structure, heteromultimer composed of HisG and HisZ subunits.

The protein resides in the cytoplasm. It catalyses the reaction 1-(5-phospho-beta-D-ribosyl)-ATP + diphosphate = 5-phospho-alpha-D-ribose 1-diphosphate + ATP. It participates in amino-acid biosynthesis; L-histidine biosynthesis; L-histidine from 5-phospho-alpha-D-ribose 1-diphosphate: step 1/9. Functionally, catalyzes the condensation of ATP and 5-phosphoribose 1-diphosphate to form N'-(5'-phosphoribosyl)-ATP (PR-ATP). Has a crucial role in the pathway because the rate of histidine biosynthesis seems to be controlled primarily by regulation of HisG enzymatic activity. This is ATP phosphoribosyltransferase from Clostridium botulinum (strain ATCC 19397 / Type A).